An 837-amino-acid polypeptide reads, in one-letter code: Dapper homolog 2 (837 aa).

The stretch at 65-113 (ENVSKEELRLEATLSLLKQQLTRLRRQDVGLKTHLQQLDQQITELKLDV) forms a coiled coil. 5 disordered regions span residues 189–265 (ADES…PKYQ), 424–497 (HGKH…DKSS), 512–564 (GSQR…KQSG), 600–649 (QQIP…HTQR), and 738–782 (EMSD…EDEG). 2 stretches are compositionally biased toward polar residues: residues 246–265 (VKSS…PKYQ) and 432–445 (LDLQ…NNTA). Composition is skewed to basic and acidic residues over residues 456–466 (ASEKRSGHFPK), 486–496 (EGSRASCHDKS), and 548–560 (LSRE…RTDL). Residues 741-759 (DYTTNRFGDSESSQGSQTA) are compositionally biased toward polar residues. Residues 768–782 (LDEEDLLEEEEEDEG) show a composition bias toward acidic residues. Positions 834–837 (MTLV) match the PDZ-binding motif.

This sequence belongs to the dapper family. As to quaternary structure, interacts with dvl2.

Its subcellular location is the cytoplasm. The protein resides in the late endosome. It is found in the nucleus. The protein localises to the cell membrane. Involved in regulation of intracellular signaling pathways during development. Specifically thought to play a role in canonical and/or non-canonical Wnt signaling pathways through interaction with DSH (Dishevelled) family proteins. Positive regulator of the Wnt signaling pathway which acts downstream of wnt1 indicative for non-canonical Wnt signaling. Also negatively regulates the Nodal signaling pathway, possibly by promoting the lysosomal degradation of Nodal receptors. Required for convergent extension movements in gastrulation. The protein is Dapper homolog 2 (dact2) of Danio rerio (Zebrafish).